A 162-amino-acid polypeptide reads, in one-letter code: Corticoliberin-1 (162 aa).

Positions 1–24 are cleaved as a signal peptide; that stretch reads MKLNFLVTTVALLVAFPPPYECRA. Residues 25–119 constitute a propeptide that is removed on maturation; that stretch reads IDSSSNQPAT…ALDSEERERR (95 aa). Phenylalanine 160 carries the post-translational modification Phenylalanine amide.

It belongs to the sauvagine/corticotropin-releasing factor/urotensin I family.

It is found in the secreted. Its function is as follows. This hormone from hypothalamus regulates the release of corticotropin from pituitary gland. The polypeptide is Corticoliberin-1 (crf1) (Catostomus commersonii (White sucker)).